Reading from the N-terminus, the 165-residue chain is MKSVLPSTPIVTLKPKIEDSFAITFAPLSLEEIHALADDSANGAVVVMSGMVRNQTDGKPVVSLEYQAYEPMALRVFYQIAADIRSAWPAVNRVVIHHRIGRLQVGQISVLVAIGCPHRSEAFAACRYAIDTLKHNAPIWKKEHWQDGSSTWVSIGACEQSGQNC.

Substrate-binding positions include 51 to 53 (MVR), 118 to 119 (HR), K134, and 141 to 143 (KKE).

The protein belongs to the MoaE family. In terms of assembly, heterotetramer of 2 MoaD subunits and 2 MoaE subunits. Also stable as homodimer. The enzyme changes between these two forms during catalysis.

The catalysed reaction is 2 [molybdopterin-synthase sulfur-carrier protein]-C-terminal-Gly-aminoethanethioate + cyclic pyranopterin phosphate + H2O = molybdopterin + 2 [molybdopterin-synthase sulfur-carrier protein]-C-terminal Gly-Gly + 2 H(+). It functions in the pathway cofactor biosynthesis; molybdopterin biosynthesis. Functionally, converts molybdopterin precursor Z into molybdopterin. This requires the incorporation of two sulfur atoms into precursor Z to generate a dithiolene group. The sulfur is provided by MoaD. The chain is Molybdopterin synthase catalytic subunit (moaE) from Nostoc sp. (strain PCC 7120 / SAG 25.82 / UTEX 2576).